Reading from the N-terminus, the 474-residue chain is Glutamate--tRNA ligase (474 aa).

A 'HIGH' region motif is present at residues 9–19 (PSPTGYLHVGG). The 'KMSKS' region signature appears at 240–244 (KLSKR). Position 243 (lysine 243) interacts with ATP.

Belongs to the class-I aminoacyl-tRNA synthetase family. Glutamate--tRNA ligase type 1 subfamily. In terms of assembly, monomer.

The protein localises to the cytoplasm. The enzyme catalyses tRNA(Glu) + L-glutamate + ATP = L-glutamyl-tRNA(Glu) + AMP + diphosphate. Catalyzes the attachment of glutamate to tRNA(Glu) in a two-step reaction: glutamate is first activated by ATP to form Glu-AMP and then transferred to the acceptor end of tRNA(Glu). This is Glutamate--tRNA ligase from Aliivibrio fischeri (strain ATCC 700601 / ES114) (Vibrio fischeri).